A 533-amino-acid chain; its full sequence is Trigger factor (533 aa).

The PPIase FKBP-type domain maps to 164–249 (GDQLIIDFTG…VKQVKVETDT (86 aa)). A disordered region spans residues 436–533 (EAAIEAEAEE…APAKKPAAKK (98 aa)). Positions 465 to 477 (AAAKKAPAKKAPA) are enriched in basic residues. A compositionally biased stretch (basic and acidic residues) spans 481–490 (AAKDGDEKPA). Basic residues-rich tracts occupy residues 494-506 (APAK…KAST) and 515-533 (PAKK…AAKK).

This sequence belongs to the FKBP-type PPIase family. Tig subfamily.

It is found in the cytoplasm. The catalysed reaction is [protein]-peptidylproline (omega=180) = [protein]-peptidylproline (omega=0). Its function is as follows. Involved in protein export. Acts as a chaperone by maintaining the newly synthesized protein in an open conformation. Functions as a peptidyl-prolyl cis-trans isomerase. The sequence is that of Trigger factor from Erythrobacter litoralis (strain HTCC2594).